Consider the following 132-residue polypeptide: Translation initiation factor 2 subunit beta (132 aa).

Positions 1–30 (MDYEEQLDRAMDEKPDVTGSETRFEVPDPN) are disordered.

This sequence belongs to the eIF-2-beta/eIF-5 family. In terms of assembly, heterotrimer composed of an alpha, a beta and a gamma chain.

EIF-2 functions in the early steps of protein synthesis by forming a ternary complex with GTP and initiator tRNA. This is Translation initiation factor 2 subunit beta from Halobacterium salinarum (strain ATCC 29341 / DSM 671 / R1).